A 631-amino-acid polypeptide reads, in one-letter code: Transmembrane and coiled-coil domain-containing protein 4 (631 aa).

The tract at residues 1–26 (MATWNRPHPRLPVAPEPVAEGESQQP) is disordered. Positions 153 to 183 (EEVFLESLKDAKEEESETAEESRKRKEKRRK) form a coiled coil. 4 helical membrane-spanning segments follow: residues 187 to 203 (YLLI…VIGV), 204 to 220 (TGGL…ATII), 228 to 248 (LGSV…GAGL), and 343 to 363 (LSGI…ANVI). Positions 523 to 631 (WSEKGLPLAP…ETQESCAELD (109 aa)) are disordered. Residues 571 to 590 (IPSSASQAQVPAGLDQSTED) show a composition bias toward polar residues.

The protein belongs to the TMCO4 family.

It localises to the membrane. In Rattus norvegicus (Rat), this protein is Transmembrane and coiled-coil domain-containing protein 4 (Tmco4).